A 376-amino-acid chain; its full sequence is Multicilin (376 aa).

Residues 165-213 (EQYWRDVADHNQKALGDALVENNQLQVSLTEKQEEIASLKEKNIQLNEL) adopt a coiled-coil conformation. Positions 230-261 (ERPKHSSGATQGRLPVKRSLEDFYPQSNEPDS) are disordered. Positions 331-376 (TELEEDVSFRTSIKEHSTIRTLAFPQGNAFTIRTAAGGYKFRWVPN) are TIRT domain.

Belongs to the geminin family. Component of the EDM complex, at least composed of e2f4, e2f5, mcidas and tfdp1.

It localises to the nucleus. In terms of biological role, transcription regulator specifically required for multiciliate cell differentiation. Acts in a multiprotein complex containing e2f4 and e2f5 that binds and activate genes required for centriole biogenesis. Activates genes required for centriole assembly (plk4, cep152) and genes specifically required for motile cilia formation (foxj1). Also promotes the deuterosome pathway of centriole biogenesis by activating expression of deup1, but not its paralog cep63. The protein is Multicilin (mcidas) of Xenopus tropicalis (Western clawed frog).